The sequence spans 161 residues: Allophycocyanin alpha chain (161 aa).

Asn71 is modified (N4-methylasparagine). Cys81 is a binding site for (2R,3E)-phycocyanobilin.

It belongs to the phycobiliprotein family. As to quaternary structure, heterodimer of an alpha and a beta chain. In terms of processing, contains one covalently linked phycocyanobilin chromophore.

The protein resides in the cellular thylakoid membrane. Light-harvesting photosynthetic bile pigment-protein from the phycobiliprotein complex. Allophycocyanin has a maximum absorption at approximately 650 nanometers. The chain is Allophycocyanin alpha chain (apcA) from Synechocystis sp. (strain ATCC 27184 / PCC 6803 / Kazusa).